We begin with the raw amino-acid sequence, 153 residues long: 6,7-dimethyl-8-ribityllumazine synthase 1 (153 aa).

5-amino-6-(D-ribitylamino)uracil is bound by residues Phe16, 50 to 52 (AYE), and 74 to 76 (CVI). 79-80 (ET) contributes to the (2S)-2-hydroxy-3-oxobutyl phosphate binding site. His82 serves as the catalytic Proton donor. Phe107 is a 5-amino-6-(D-ribitylamino)uracil binding site. Arg121 contributes to the (2S)-2-hydroxy-3-oxobutyl phosphate binding site.

Belongs to the DMRL synthase family.

The catalysed reaction is (2S)-2-hydroxy-3-oxobutyl phosphate + 5-amino-6-(D-ribitylamino)uracil = 6,7-dimethyl-8-(1-D-ribityl)lumazine + phosphate + 2 H2O + H(+). The protein operates within cofactor biosynthesis; riboflavin biosynthesis; riboflavin from 2-hydroxy-3-oxobutyl phosphate and 5-amino-6-(D-ribitylamino)uracil: step 1/2. Functionally, catalyzes the formation of 6,7-dimethyl-8-ribityllumazine by condensation of 5-amino-6-(D-ribitylamino)uracil with 3,4-dihydroxy-2-butanone 4-phosphate. This is the penultimate step in the biosynthesis of riboflavin. This is 6,7-dimethyl-8-ribityllumazine synthase 1 from Caulobacter vibrioides (strain ATCC 19089 / CIP 103742 / CB 15) (Caulobacter crescentus).